Here is a 284-residue protein sequence, read N- to C-terminus: NADH-cytochrome b5 reductase 1 (284 aa).

The helical transmembrane segment at 7 to 27 (KLVVVIVIVVVPLLFKFIIGP) threads the bilayer. Positions 38–142 (NDFQSFPLVE…KGPRGNYHYE (105 aa)) constitute an FAD-binding FR-type domain. FAD-binding positions include 122–137 (GELK…GPRG) and 148–180 (HLGM…KVSL).

Belongs to the flavoprotein pyridine nucleotide cytochrome reductase family. In terms of assembly, monomer. Component of the 2-(3-amino-3-carboxypropyl)histidine synthase complex composed of DPH1, DPH2, KTI11/DPH3 and a NADH-dependent reductase, predominantly CBR1. Interacts with KTI11/DPH3. Interacts with STE20. The cofactor is FAD.

It is found in the mitochondrion outer membrane. The enzyme catalyses 2 Fe(III)-[cytochrome b5] + NADH = 2 Fe(II)-[cytochrome b5] + NAD(+) + H(+). The catalysed reaction is 2 Fe(3+)-[Dph3] + NADH = 2 Fe(2+)-[Dph3] + NAD(+) + H(+). It participates in protein modification; peptidyl-diphthamide biosynthesis. Its activity is regulated as follows. Competitively inhibited by NAD(+). Inhibited by mercurials such as p-chloromercuribenzoate (PCMB) and HgCl(2). Enzymatic activity increases under anaerobic conditions. NADH-dependent reductase for KTI11/DPH3 and cytochrome b5. Required for the first step of diphthamide biosynthesis, a post-translational modification of histidine which occurs in elongation factor 2. DPH1 and DPH2 transfer a 3-amino-3-carboxypropyl (ACP) group from S-adenosyl-L-methionine (SAM) to a histidine residue, the reaction is assisted by a reduction system comprising KTI11/DPH3 and a NADH-dependent reductase, predominantly CBR1. By reducing KTI11/DPH3, also involved in the formation of the tRNA wobble base modification mcm5s 2U (5-methoxycarbonylmethyl-2-thiouridine), mediated by the elongator complex. The cytochrome b5/NADH cytochrome b5 reductase electron transfer system supports the catalytic activity of several sterol biosynthetic enzymes. Plays a role in bud morphology. This Saccharomyces cerevisiae (strain ATCC 204508 / S288c) (Baker's yeast) protein is NADH-cytochrome b5 reductase 1 (CBR1).